Here is a 212-residue protein sequence, read N- to C-terminus: MPDFSIENEILKLKNNKECIIVGVDEVGYGSLAGPVVSAAVFFPNYNNETTQDINDSKKLTPKTRQKIYNKIITRVKWSIGFAHIFEIDEYNILNATHIAMKRALTGLNAHIDIDYVIIDGNKIPNIPWNAQAIIGGDTISTSIAAASIIAKVTRDRLMETLHIQYPQYNWNKNKGYGTKDHITSLYKYGKTIHHRNTFTPISKISYMFKNS.

An RNase H type-2 domain is found at 19 to 212 (CIIVGVDEVG…SKISYMFKNS (194 aa)). Residues aspartate 25, glutamate 26, and aspartate 120 each coordinate a divalent metal cation.

The protein belongs to the RNase HII family. Requires Mn(2+) as cofactor. The cofactor is Mg(2+).

Its subcellular location is the cytoplasm. The catalysed reaction is Endonucleolytic cleavage to 5'-phosphomonoester.. In terms of biological role, endonuclease that specifically degrades the RNA of RNA-DNA hybrids. The polypeptide is Ribonuclease HII (Ehrlichia ruminantium (strain Welgevonden)).